We begin with the raw amino-acid sequence, 218 residues long: GILT-like protein ZK669.3 (218 aa).

An N-terminal signal peptide occupies residues 1–21 (MRRLNGVFICLILFITKISYA). N-linked (GlcNAc...) asparagine glycans are attached at residues asparagine 129 and asparagine 185.

This sequence belongs to the GILT family.

The protein localises to the secreted. The chain is GILT-like protein ZK669.3 from Caenorhabditis elegans.